A 209-amino-acid polypeptide reads, in one-letter code: Ribosomal RNA large subunit methyltransferase E (209 aa).

S-adenosyl-L-methionine contacts are provided by G63, W65, D83, D99, and D124. The active-site Proton acceptor is the K164.

This sequence belongs to the class I-like SAM-binding methyltransferase superfamily. RNA methyltransferase RlmE family.

Its subcellular location is the cytoplasm. The enzyme catalyses uridine(2552) in 23S rRNA + S-adenosyl-L-methionine = 2'-O-methyluridine(2552) in 23S rRNA + S-adenosyl-L-homocysteine + H(+). Functionally, specifically methylates the uridine in position 2552 of 23S rRNA at the 2'-O position of the ribose in the fully assembled 50S ribosomal subunit. This is Ribosomal RNA large subunit methyltransferase E from Shigella dysenteriae serotype 1 (strain Sd197).